A 92-amino-acid polypeptide reads, in one-letter code: Small ribosomal subunit protein uS19 (92 aa).

The protein belongs to the universal ribosomal protein uS19 family.

Functionally, protein S19 forms a complex with S13 that binds strongly to the 16S ribosomal RNA. This Paracidovorax citrulli (strain AAC00-1) (Acidovorax citrulli) protein is Small ribosomal subunit protein uS19.